Consider the following 157-residue polypeptide: uncharacterized protein (157 aa).

Positions 1 to 28 are cleaved as a signal peptide; sequence MKRLFMKASLVLFAVVFVFAVKGAPAKA.

This is an uncharacterized protein from Bacillus subtilis (strain 168).